Reading from the N-terminus, the 478-residue chain is Protein nucleotidyltransferase YdiU (478 aa).

ATP contacts are provided by glycine 83, glycine 85, arginine 86, lysine 106, aspartate 118, glycine 119, arginine 169, and arginine 176. The active-site Proton acceptor is aspartate 245. Mg(2+) is bound by residues asparagine 246 and aspartate 255. Position 255 (aspartate 255) interacts with ATP.

The protein belongs to the SELO family. Mg(2+) is required as a cofactor. The cofactor is Mn(2+).

It carries out the reaction L-seryl-[protein] + ATP = 3-O-(5'-adenylyl)-L-seryl-[protein] + diphosphate. It catalyses the reaction L-threonyl-[protein] + ATP = 3-O-(5'-adenylyl)-L-threonyl-[protein] + diphosphate. The catalysed reaction is L-tyrosyl-[protein] + ATP = O-(5'-adenylyl)-L-tyrosyl-[protein] + diphosphate. The enzyme catalyses L-histidyl-[protein] + UTP = N(tele)-(5'-uridylyl)-L-histidyl-[protein] + diphosphate. It carries out the reaction L-seryl-[protein] + UTP = O-(5'-uridylyl)-L-seryl-[protein] + diphosphate. It catalyses the reaction L-tyrosyl-[protein] + UTP = O-(5'-uridylyl)-L-tyrosyl-[protein] + diphosphate. In terms of biological role, nucleotidyltransferase involved in the post-translational modification of proteins. It can catalyze the addition of adenosine monophosphate (AMP) or uridine monophosphate (UMP) to a protein, resulting in modifications known as AMPylation and UMPylation. The sequence is that of Protein nucleotidyltransferase YdiU from Exiguobacterium sp. (strain ATCC BAA-1283 / AT1b).